The following is a 259-amino-acid chain: Phosphatidylglycerol--prolipoprotein diacylglyceryl transferase (259 aa).

4 consecutive transmembrane segments (helical) span residues 12 to 32 (LSLH…VYLA), 46 to 66 (IIDF…IYYV), 83 to 103 (IWNG…VLFV), and 109 to 129 (VLNP…AQAI). Arginine 131 lines the a 1,2-diacyl-sn-glycero-3-phospho-(1'-sn-glycerol) pocket. A run of 3 helical transmembrane segments spans residues 167–187 (VPTF…IMVW), 194–214 (LVDG…RLVI), and 226–246 (GIRV…VFIF).

The protein belongs to the Lgt family.

Its subcellular location is the cell membrane. The catalysed reaction is L-cysteinyl-[prolipoprotein] + a 1,2-diacyl-sn-glycero-3-phospho-(1'-sn-glycerol) = an S-1,2-diacyl-sn-glyceryl-L-cysteinyl-[prolipoprotein] + sn-glycerol 1-phosphate + H(+). The protein operates within protein modification; lipoprotein biosynthesis (diacylglyceryl transfer). Functionally, catalyzes the transfer of the diacylglyceryl group from phosphatidylglycerol to the sulfhydryl group of the N-terminal cysteine of a prolipoprotein, the first step in the formation of mature lipoproteins. In Streptococcus equi subsp. equi (strain 4047), this protein is Phosphatidylglycerol--prolipoprotein diacylglyceryl transferase.